The following is a 427-amino-acid chain: 3-deoxy-D-manno-octulosonic acid transferase (427 aa).

Residues 4–24 (FFYTSLLLICQPLILCFIGLL) form a helical; Signal-anchor membrane-spanning segment. Residue E62 is the Proton acceptor of the active site. CMP is bound by residues 270 to 271 (PR), 311 to 313 (MGE), and 337 to 340 (NPLE).

The protein belongs to the glycosyltransferase group 1 family. Glycosyltransferase 30 subfamily.

Its subcellular location is the cell inner membrane. It carries out the reaction lipid IVA (E. coli) + CMP-3-deoxy-beta-D-manno-octulosonate = alpha-Kdo-(2-&gt;6)-lipid IVA (E. coli) + CMP + H(+). It functions in the pathway bacterial outer membrane biogenesis; LPS core biosynthesis. Functionally, involved in lipopolysaccharide (LPS) biosynthesis. Catalyzes the transfer of a single 3-deoxy-D-manno-octulosonate (Kdo) residue from CMP-Kdo to lipid IV(A), the tetraacyldisaccharide-1,4'-bisphosphate precursor of lipid A. Is strictly monofunctional, i.e. is capable of adding only a single Kdo residue to the acceptor lipid. This Haemophilus influenzae (strain ATCC 51907 / DSM 11121 / KW20 / Rd) protein is 3-deoxy-D-manno-octulosonic acid transferase (waaA).